The sequence spans 859 residues: Leucine--tRNA ligase (859 aa).

The 'HIGH' region motif lies at 42–52 (PYPSGRLHMGH). A 'KMSKS' region motif is present at residues 618 to 622 (KMSKS). Lys-621 provides a ligand contact to ATP.

Belongs to the class-I aminoacyl-tRNA synthetase family.

It localises to the cytoplasm. It carries out the reaction tRNA(Leu) + L-leucine + ATP = L-leucyl-tRNA(Leu) + AMP + diphosphate. This Shewanella sp. (strain MR-7) protein is Leucine--tRNA ligase.